The chain runs to 209 residues: E3 ubiquitin-protein ligase RNF138 (209 aa).

The RING-type zinc-finger motif lies at 18–58 (CPVCQEVLKTPVRTAACQHVFCRKCFLTAMRESGIHCPLCR). 4 residues coordinate Zn(2+): cysteine 86, cysteine 89, histidine 101, and cysteine 105. Residues 86 to 105 (CRCCSKKIKFYRMRHHYKSC) form a C2HC RNF-type zinc finger. Residues 125–154 (QDSVRSSNRSETSASDNTETYQEDTSSSGH) form a disordered region. Position 142 is a phosphothreonine (threonine 142). A C2H2-type zinc finger spans residues 157–180 (FKCPLCQESNFTRQRLLDHCNSNH). Residues 189–207 (LQLDEETQYQTAVEESFQV) form the UIM domain.

In terms of assembly, interacts with NLK. Interacts with XRCC5/Ku80. Interacts with RBBP8/CtIP. In terms of processing, auto-ubiquitinated.

It is found in the chromosome. It carries out the reaction S-ubiquitinyl-[E2 ubiquitin-conjugating enzyme]-L-cysteine + [acceptor protein]-L-lysine = [E2 ubiquitin-conjugating enzyme]-L-cysteine + N(6)-ubiquitinyl-[acceptor protein]-L-lysine.. Its pathway is protein modification; protein ubiquitination. In terms of biological role, E3 ubiquitin-protein ligase involved in DNA damage response by promoting DNA resection and homologous recombination. Recruited to sites of double-strand breaks following DNA damage and specifically promotes double-strand break repair via homologous recombination. Two different, non-exclusive, mechanisms have been proposed. According to a report, regulates the choice of double-strand break repair by favoring homologous recombination over non-homologous end joining (NHEJ): acts by mediating ubiquitination of XRCC5/Ku80, leading to remove the Ku complex from DNA breaks, thereby promoting homologous recombination. According to another report, cooperates with UBE2Ds E2 ubiquitin ligases (UBE2D1, UBE2D2, UBE2D3 or UBE2D4) to promote homologous recombination by mediating ubiquitination of RBBP8/CtIP. Together with NLK, involved in the ubiquitination and degradation of TCF/LEF. Also exhibits auto-ubiquitination activity in combination with UBE2K. May act as a negative regulator in the Wnt/beta-catenin-mediated signaling pathway. The protein is E3 ubiquitin-protein ligase RNF138 of Rattus norvegicus (Rat).